Consider the following 669-residue polypeptide: Threonine--tRNA ligase (669 aa).

The TGS domain occupies 3–60; the sequence is DAQQITLIVDGEETKVTEGTTGAELFFERRDVVVARVNGVLKDLDQVLTEGADVEGVT. Residues 260-566 form a catalytic region; that stretch reads DHRKLGVELD…LTEHYAGAFP (307 aa). C365, H416, and H543 together coordinate Zn(2+).

The protein belongs to the class-II aminoacyl-tRNA synthetase family. Homodimer. It depends on Zn(2+) as a cofactor.

It localises to the cytoplasm. It carries out the reaction tRNA(Thr) + L-threonine + ATP = L-threonyl-tRNA(Thr) + AMP + diphosphate + H(+). Functionally, catalyzes the attachment of threonine to tRNA(Thr) in a two-step reaction: L-threonine is first activated by ATP to form Thr-AMP and then transferred to the acceptor end of tRNA(Thr). Also edits incorrectly charged L-seryl-tRNA(Thr). This is Threonine--tRNA ligase from Paenarthrobacter aurescens (strain TC1).